The primary structure comprises 604 residues: Nuclear cap-binding protein subunit 3 (604 aa).

The tract at residues 1–36 is disordered; the sequence is MAAVRGLRISVKAEATATTAEPRGPEPEPMEVEEGE. Residues 116 to 177 form an RNA recognition motif (RRM) domain region; it reads DTIYICGVDE…MSSFPDQEKP (62 aa). The short motif at 145-148 is the WLDD motif; essential for 7-methylguanosine-containing mRNA cap binding element; the sequence is WLDD. Disordered stretches follow at residues 168–219, 319–383, and 457–604; these read MSSF…DIEL, KHRH…DSDE, and QNNN…DTES. Basic and acidic residues predominate over residues 173–198; the sequence is DQEKPKGGENNEEKTAEKNKKEKQEE. Acidic residues-rich tracts occupy residues 199–219 and 331–349; these read STDD…DIEL and EPIE…DEDD. Basic and acidic residues predominate over residues 350-370; that stretch reads RVVVEYRDDLQPFKQSRDRGA. Residues 458–469 are compositionally biased toward polar residues; sequence NNNGLRQPNSIV. Composition is skewed to basic and acidic residues over residues 495–505, 539–548, and 569–582; these read PRREPISDVHS, TQEKTSDKPE, and IKEK…KSRL. The segment covering 595–604 has biased composition (low complexity); the sequence is ESSSGSDTES.

The protein belongs to the NCBP3 family. As to quaternary structure, component of an alternative cap-binding complex (CBC) composed of NCBP1/CBP80 and NCBP3.

The protein localises to the nucleus. It is found in the cytoplasm. Associates with NCBP1/CBP80 to form an alternative cap-binding complex (CBC) which plays a key role in mRNA export. NCBP3 serves as adapter protein linking the capped RNAs (m7GpppG-capped RNA) to NCBP1/CBP80. Unlike the conventional CBC with NCBP2 which binds both small nuclear RNA (snRNA) and messenger (mRNA) and is involved in their export from the nucleus, the alternative CBC with NCBP3 does not bind snRNA and associates only with mRNA thereby playing a role in only mRNA export. In Gallus gallus (Chicken), this protein is Nuclear cap-binding protein subunit 3.